The sequence spans 496 residues: Glycerol kinase (496 aa).

Residue threonine 12 participates in ADP binding. ATP-binding residues include threonine 12, threonine 13, and serine 14. A sn-glycerol 3-phosphate-binding site is contributed by threonine 12. Arginine 16 contributes to the ADP binding site. Positions 82, 83, and 134 each coordinate sn-glycerol 3-phosphate. 3 residues coordinate glycerol: arginine 82, glutamate 83, and tyrosine 134. Histidine 230 carries the post-translational modification Phosphohistidine; by HPr. Residue aspartate 244 participates in sn-glycerol 3-phosphate binding. 2 residues coordinate glycerol: aspartate 244 and glutamine 245. The ADP site is built by threonine 266 and glycine 309. Threonine 266, glycine 309, glutamine 313, and glycine 410 together coordinate ATP. ADP-binding residues include glycine 410 and asparagine 414.

Belongs to the FGGY kinase family. The phosphoenolpyruvate-dependent sugar phosphotransferase system (PTS), including enzyme I, and histidine-containing protein (HPr) are required for the phosphorylation of, which leads to the activation of the enzyme.

The enzyme catalyses glycerol + ATP = sn-glycerol 3-phosphate + ADP + H(+). Its pathway is polyol metabolism; glycerol degradation via glycerol kinase pathway; sn-glycerol 3-phosphate from glycerol: step 1/1. Inhibited by fructose 1,6-bisphosphate and p-chloromercuribenzoate (PCMB). In terms of biological role, key enzyme in the regulation of glycerol uptake and metabolism. Catalyzes the phosphorylation of glycerol to yield sn-glycerol 3-phosphate. The sequence is that of Glycerol kinase from Thermus thermophilus.